A 173-amino-acid polypeptide reads, in one-letter code: ATP synthase subunit delta (173 aa).

The protein belongs to the ATPase delta chain family. In terms of assembly, F-type ATPases have 2 components, F(1) - the catalytic core - and F(0) - the membrane proton channel. F(1) has five subunits: alpha(3), beta(3), gamma(1), delta(1), epsilon(1). F(0) has three main subunits: a(1), b(2) and c(10-14). The alpha and beta chains form an alternating ring which encloses part of the gamma chain. F(1) is attached to F(0) by a central stalk formed by the gamma and epsilon chains, while a peripheral stalk is formed by the delta and b chains.

Its subcellular location is the cell inner membrane. In terms of biological role, f(1)F(0) ATP synthase produces ATP from ADP in the presence of a proton or sodium gradient. F-type ATPases consist of two structural domains, F(1) containing the extramembraneous catalytic core and F(0) containing the membrane proton channel, linked together by a central stalk and a peripheral stalk. During catalysis, ATP synthesis in the catalytic domain of F(1) is coupled via a rotary mechanism of the central stalk subunits to proton translocation. Its function is as follows. This protein is part of the stalk that links CF(0) to CF(1). It either transmits conformational changes from CF(0) to CF(1) or is implicated in proton conduction. The protein is ATP synthase subunit delta of Campylobacter jejuni subsp. doylei (strain ATCC BAA-1458 / RM4099 / 269.97).